We begin with the raw amino-acid sequence, 874 residues long: Cyanophycin synthetase (874 aa).

Residues 224–480 (KTTLAEAGIP…VAAPVIDMLF (257 aa)) form the ATP-grasp domain. 495-501 (GTNGKTT) contributes to the ATP binding site.

In the C-terminal section; belongs to the MurCDEF family. Homodimer.

The catalysed reaction is [L-4-(L-arginin-2-N-yl)aspartate](n) + L-aspartate + ATP = [L-4-(L-arginin-2-N-yl)aspartate](n)-L-aspartate + ADP + phosphate + H(+). It catalyses the reaction [L-4-(L-arginin-2-N-yl)aspartate](n)-L-aspartate + L-arginine + ATP = [L-4-(L-arginin-2-N-yl)aspartate](n+1) + ADP + phosphate + H(+). In terms of biological role, catalyzes the ATP-dependent polymerization of arginine and aspartate to multi-L-arginyl-poly-L-aspartic acid (cyanophycin; a water-insoluble reserve polymer). The chain is Cyanophycin synthetase (cphA) from Geminocystis herdmanii (strain PCC 6308) (Synechocystis sp. (strain PCC 6308)).